A 200-amino-acid polypeptide reads, in one-letter code: Pyridoxal 5'-phosphate synthase subunit PdxT (200 aa).

50–52 contacts L-glutamine; the sequence is GES. Residue Cys-82 is the Nucleophile of the active site. L-glutamine is bound by residues Arg-110 and 138 to 139; that span reads IR. Residues His-174 and Glu-176 each act as charge relay system in the active site.

It belongs to the glutaminase PdxT/SNO family. As to quaternary structure, in the presence of PdxS, forms a dodecamer of heterodimers. Only shows activity in the heterodimer.

The enzyme catalyses aldehydo-D-ribose 5-phosphate + D-glyceraldehyde 3-phosphate + L-glutamine = pyridoxal 5'-phosphate + L-glutamate + phosphate + 3 H2O + H(+). It carries out the reaction L-glutamine + H2O = L-glutamate + NH4(+). The protein operates within cofactor biosynthesis; pyridoxal 5'-phosphate biosynthesis. In terms of biological role, catalyzes the hydrolysis of glutamine to glutamate and ammonia as part of the biosynthesis of pyridoxal 5'-phosphate. The resulting ammonia molecule is channeled to the active site of PdxS. The sequence is that of Pyridoxal 5'-phosphate synthase subunit PdxT from Oceanobacillus iheyensis (strain DSM 14371 / CIP 107618 / JCM 11309 / KCTC 3954 / HTE831).